The primary structure comprises 458 residues: MPN domain-containing protein (458 aa).

The segment at 1 to 37 (MGSEPPSSPQVVEEGADEEDEELSGAEDADLRSSSGR) is disordered. Positions 14-28 (EGADEEDEELSGAED) are enriched in acidic residues. In terms of domain architecture, RAMA spans 42–137 (TRRGITLRVL…QYKTTWLHKY (96 aa)). 3 residues coordinate DNA: serine 94, serine 96, and tryptophan 116. The segment at 147-175 (SEGEDDEMGDDDEEEGKTTIPVEDKNKKS) is disordered. The span at 148-161 (EGEDDEMGDDDEEE) shows a compositional bias: acidic residues. Residues 229–364 (VAVSSNVLLL…VASTITPFWV (136 aa)) form the MPN domain. Positions 306, 308, and 319 each coordinate Zn(2+). A JAMM motif motif is present at residues 306 to 319 (HSHPRGPALPSLQD).

The protein belongs to the peptidase M67 family. Post-translationally, degraded following binding to N(6)-methyladenosine methylated DNA (m6A).

In terms of biological role, probable protease. Acts as a sensor of N(6)-methyladenosine methylation on DNA (m6A): recognizes and binds m6A DNA, leading to its degradation. Binds only double strand DNA (dsDNA) in a sequence-independent manner. The protein is MPN domain-containing protein of Danio rerio (Zebrafish).